We begin with the raw amino-acid sequence, 75 residues long: Beta-defensin 42 (75 aa).

The first 21 residues, 1 to 21 (MNLRLSCLLFILVTSLPAGRC), serve as a signal peptide directing secretion. Cystine bridges form between cysteine 33–cysteine 60, cysteine 40–cysteine 54, and cysteine 44–cysteine 61.

It belongs to the beta-defensin family. In terms of tissue distribution, epididymis-specific, with highest levels in the initial segment and distal caput.

It is found in the secreted. Its function is as follows. Has bactericidal activity. May play a role in the antimicrobial protection of sperm and urogenital tract epithelia. The polypeptide is Beta-defensin 42 (Mus musculus (Mouse)).